An 874-amino-acid polypeptide reads, in one-letter code: Alanine--tRNA ligase (874 aa).

The Zn(2+) site is built by His562, His566, Cys665, and His669.

Belongs to the class-II aminoacyl-tRNA synthetase family. Zn(2+) serves as cofactor.

Its subcellular location is the cytoplasm. It carries out the reaction tRNA(Ala) + L-alanine + ATP = L-alanyl-tRNA(Ala) + AMP + diphosphate. Its function is as follows. Catalyzes the attachment of alanine to tRNA(Ala) in a two-step reaction: alanine is first activated by ATP to form Ala-AMP and then transferred to the acceptor end of tRNA(Ala). Also edits incorrectly charged Ser-tRNA(Ala) and Gly-tRNA(Ala) via its editing domain. The sequence is that of Alanine--tRNA ligase from Pseudomonas savastanoi pv. phaseolicola (strain 1448A / Race 6) (Pseudomonas syringae pv. phaseolicola (strain 1448A / Race 6)).